A 247-amino-acid polypeptide reads, in one-letter code: L-cystine import ATP-binding protein TcyC (247 aa).

Positions Leu2–Leu240 constitute an ABC transporter domain. An ATP-binding site is contributed by Gly34–Thr41.

It belongs to the ABC transporter superfamily. L-cystine importer (TC 3.A.1.3.14) family. The complex is composed of two ATP-binding proteins (TcyC), two transmembrane proteins (TcyB) and a solute-binding protein (TcyA).

The protein localises to the cell membrane. Part of the ABC transporter complex TcyABC involved in L-cystine import. Responsible for energy coupling to the transport system. This is L-cystine import ATP-binding protein TcyC (tcyC) from Bacillus subtilis (strain 168).